A 245-amino-acid polypeptide reads, in one-letter code: Complement C1q subcomponent subunit A (245 aa).

The N-terminal stretch at 1-22 is a signal peptide; sequence MEGPRGWLVLCVLAISLASMVT. The segment covering 27-38 has biased composition (basic and acidic residues); sequence RAPDGKKGEAGR. The interval 27-114 is disordered; sequence RAPDGKKGEA…SPGNIKDQPR (88 aa). The Collagen-like domain occupies 31–109; the sequence is GKKGEAGRPG…KGTKGSPGNI (79 aa). The residue at position 33 (lysine 33) is a 5-hydroxylysine. Lysine 33 carries O-linked (Gal...) hydroxylysine glycosylation. Residues proline 39 and proline 45 each carry the 4-hydroxyproline modification. Position 48 is a 5-hydroxylysine (lysine 48). The O-linked (Gal...) hydroxylysine glycan is linked to lysine 48. 4-hydroxyproline occurs at positions 54 and 57. Lysine 67 bears the 5-hydroxylysine mark. O-linked (Gal...) hydroxylysine glycosylation is present at lysine 67. Residues proline 73, proline 79, and proline 85 each carry the 4-hydroxyproline modification. The residue at position 100 (lysine 100) is a 5-hydroxylysine. Residue lysine 100 is glycosylated (O-linked (Gal...) hydroxylysine). The region spanning 110-245 is the C1q domain; the sequence is KDQPRPAFSA…FSGFLIFPSA (136 aa). N-linked (GlcNAc...) asparagine glycosylation occurs at asparagine 146. Cysteines 172 and 190 form a disulfide. Glutamine 199 provides a ligand contact to Ca(2+).

In terms of assembly, core component of the complement C1 complex, a calcium-dependent complex composed of 1 molecule of the C1Q subcomplex, 2 molecules of C1R and 2 molecules of C1S. The C1Q subcomplex is composed 18 subunits: 3 chains of C1QA, C1QB, and C1QC trimerize to form 6 collagen-like triple helices connected to six globular ligand-recognition modules (C1q domain). Interacts with CR1 (via Sushi 24 and Sushi 25 domains). Interacts (via C-terminus) with CD33; this interaction activates CD33 inhibitory motifs. As to quaternary structure, (Microbial infection) Interacts with Staphylococcus aureus protein Cna; this interaction results in the inhibition of the classical complement pathway. Post-translationally, O-linked glycans are assumed to be the Glc-Gal disaccharides typically found as secondary modifications of hydroxylated lysines in collagen-like domains.

It is found in the secreted. The protein localises to the cell surface. Its activity is regulated as follows. The C1Q subcomplex is inhibited by sulfated molecules, such as triterpenoid sulfates, heparan sulfate, or chondroitin sulfates. Functionally, core component of the complement C1 complex, a multiprotein complex that initiates the classical pathway of the complement system, a cascade of proteins that leads to phagocytosis and breakdown of pathogens and signaling that strengthens the adaptive immune system. The classical complement pathway is initiated by the C1Q subcomplex of the C1 complex, which specifically binds IgG or IgM immunoglobulins complexed with antigens, forming antigen-antibody complexes on the surface of pathogens: C1QA, together with C1QB and C1QC, specifically recognizes and binds the Fc regions of IgG or IgM via its C1q domain. Immunoglobulin-binding activates the proenzyme C1R, which cleaves C1S, initiating the proteolytic cascade of the complement system. The C1Q subcomplex is activated by a hexamer of IgG complexed with antigens, while it is activated by a pentameric IgM. The C1Q subcomplex also recognizes and binds phosphatidylserine exposed on the surface of cells undergoing programmed cell death, possibly promoting activation of the complement system. In Homo sapiens (Human), this protein is Complement C1q subcomponent subunit A.